The chain runs to 151 residues: Deoxyuridine 5'-triphosphate nucleotidohydrolase (151 aa).

Substrate-binding positions include R70–G72, N83, L87–D89, and M97.

It belongs to the dUTPase family. The cofactor is Mg(2+).

It carries out the reaction dUTP + H2O = dUMP + diphosphate + H(+). The protein operates within pyrimidine metabolism; dUMP biosynthesis; dUMP from dCTP (dUTP route): step 2/2. Its function is as follows. This enzyme is involved in nucleotide metabolism: it produces dUMP, the immediate precursor of thymidine nucleotides and it decreases the intracellular concentration of dUTP so that uracil cannot be incorporated into DNA. This is Deoxyuridine 5'-triphosphate nucleotidohydrolase from Shigella sonnei (strain Ss046).